The following is a 501-amino-acid chain: Glycerol kinase (501 aa).

Position 12 (Thr-12) interacts with ADP. 3 residues coordinate ATP: Thr-12, Thr-13, and Ser-14. Position 12 (Thr-12) interacts with sn-glycerol 3-phosphate. Arg-16 is a binding site for ADP. Residues Arg-82, Glu-83, Tyr-135, and Asp-244 each contribute to the sn-glycerol 3-phosphate site. Glycerol-binding residues include Arg-82, Glu-83, Tyr-135, Asp-244, and Gln-245. ADP contacts are provided by Thr-266, Gly-309, Gly-409, and Asn-413. The ATP site is built by Thr-266, Gly-309, and Gly-409.

Belongs to the FGGY kinase family.

The catalysed reaction is glycerol + ATP = sn-glycerol 3-phosphate + ADP + H(+). Its pathway is polyol metabolism; glycerol degradation via glycerol kinase pathway; sn-glycerol 3-phosphate from glycerol: step 1/1. Inhibited by fructose 1,6-bisphosphate (FBP). In terms of biological role, key enzyme in the regulation of glycerol uptake and metabolism. Catalyzes the phosphorylation of glycerol to yield sn-glycerol 3-phosphate. The polypeptide is Glycerol kinase (Coxiella burnetii (strain RSA 331 / Henzerling II)).